The primary structure comprises 475 residues: Ribulose bisphosphate carboxylase large chain (475 aa).

A propeptide spanning residues 1–2 (MA) is cleaved from the precursor. An N-acetylproline modification is found at proline 3. Residue lysine 14 is modified to N6,N6,N6-trimethyllysine. Residues asparagine 123 and threonine 173 each contribute to the substrate site. The active-site Proton acceptor is lysine 175. Lysine 177 serves as a coordination point for substrate. Mg(2+)-binding residues include lysine 201, aspartate 203, and glutamate 204. Lysine 201 bears the N6-carboxylysine mark. The active-site Proton acceptor is the histidine 294. Residues arginine 295, histidine 327, and serine 379 each coordinate substrate.

It belongs to the RuBisCO large chain family. Type I subfamily. Heterohexadecamer of 8 large chains and 8 small chains; disulfide-linked. The disulfide link is formed within the large subunit homodimers. Requires Mg(2+) as cofactor. Post-translationally, the disulfide bond which can form in the large chain dimeric partners within the hexadecamer appears to be associated with oxidative stress and protein turnover.

It is found in the plastid. It localises to the chloroplast. It carries out the reaction 2 (2R)-3-phosphoglycerate + 2 H(+) = D-ribulose 1,5-bisphosphate + CO2 + H2O. The enzyme catalyses D-ribulose 1,5-bisphosphate + O2 = 2-phosphoglycolate + (2R)-3-phosphoglycerate + 2 H(+). In terms of biological role, ruBisCO catalyzes two reactions: the carboxylation of D-ribulose 1,5-bisphosphate, the primary event in carbon dioxide fixation, as well as the oxidative fragmentation of the pentose substrate in the photorespiration process. Both reactions occur simultaneously and in competition at the same active site. This Tupiella akineta (Green alga) protein is Ribulose bisphosphate carboxylase large chain.